The primary structure comprises 132 residues: L-ectoine synthase (132 aa).

It belongs to the ectoine synthase family.

It catalyses the reaction (2S)-4-acetamido-2-aminobutanoate = L-ectoine + H2O. The protein operates within amine and polyamine biosynthesis; ectoine biosynthesis; L-ectoine from L-aspartate 4-semialdehyde: step 3/3. Its function is as follows. Catalyzes the circularization of gamma-N-acetyl-alpha,gamma-diaminobutyric acid (ADABA) to ectoine (1,4,5,6-tetrahydro-2-methyl-4-pyrimidine carboxylic acid), which is an excellent osmoprotectant. This chain is L-ectoine synthase, found in Rhodococcus jostii (strain RHA1).